The chain runs to 136 residues: Ribosome-binding factor A (136 aa).

The protein belongs to the RbfA family. As to quaternary structure, monomer. Binds 30S ribosomal subunits, but not 50S ribosomal subunits or 70S ribosomes.

It localises to the cytoplasm. In terms of biological role, one of several proteins that assist in the late maturation steps of the functional core of the 30S ribosomal subunit. Associates with free 30S ribosomal subunits (but not with 30S subunits that are part of 70S ribosomes or polysomes). Required for efficient processing of 16S rRNA. May interact with the 5'-terminal helix region of 16S rRNA. The sequence is that of Ribosome-binding factor A from Yersinia enterocolitica serotype O:8 / biotype 1B (strain NCTC 13174 / 8081).